The primary structure comprises 86 residues: Haditoxin (86 aa).

Residues 1 to 21 (MKTLLLTLVVVTIVYLDLGYT) form the signal peptide. Intrachain disulfides connect C24–C45, C38–C62, C66–C78, and C79–C84.

The protein belongs to the three-finger toxin family. Short-chain subfamily. Orphan group VIII (haditoxin) sub-subfamily. As to quaternary structure, homodimer; non-covalently linked. In terms of tissue distribution, expressed by the venom gland.

The protein resides in the secreted. In terms of biological role, antagonist of muscle (alpha-1-beta-1-delta-epsilon/CHRNA1-CHRNB1-CHRND-CHRNE) and neuronal (alpha-7/CHRNA7, alpha-3-beta-2/CHRNA3-CHRNB2, alpha-4-beta-2/CHRNA4-CHRNB2) nicotinic acetylcholine receptors (nAChR). The highest affinity is for human alpha-7/CHRNA7 nAChRs (IC(50)=180 nM), compared to human alpha-1-beta-1-delta-epsilon/CHRNA1-CHRNB1-CHRND-CHRNE nAChR (IC(50)= 550 nM), alpha-3-beta-2/CHRNA3-CHRNB2 nAChR (IC(50)=500 nM), and alpha-4-beta-2/CHRNA4-CHRNB2 nAChR (IC(50)=2.6 uM). In Ophiophagus hannah (King cobra), this protein is Haditoxin.